The following is a 31-amino-acid chain: Glucagon-5 (31 aa).

The protein belongs to the glucagon family.

Its subcellular location is the secreted. Its function is as follows. Glucagon plays a key role in glucose metabolism and homeostasis. Regulates blood glucose by increasing gluconeogenesis and decreasing glycolysis. This is Glucagon-5 from Huso dauricus (Kaluga sturgeon).